Here is a 713-residue protein sequence, read N- to C-terminus: Leucine-rich repeat neuronal protein 2 (713 aa).

The first 18 residues, 1–18 (MRLLVAPLLLAWVAGATA), serve as a signal peptide directing secretion. At 19 to 630 (AVPVVPWHVP…CHRALGDRPG (612 aa)) the chain is on the extracellular side. In terms of domain architecture, LRRNT spans 20–69 (VPVVPWHVPCPPQCACQIRPWYTPRSSYREATTVDCNDLFLTAVPPALPA). LRR repeat units lie at residues 70–91 (GTQT…ELGY), 94–115 (NLTE…DFHA), 118–139 (QLLS…SFAG), 142–163 (SLQE…AFSG), 166–187 (NLLR…WFEM), 190–211 (NLEI…NFRP), 214–235 (NLRS…ALEG), 238–259 (SLES…ALEQ), 262–283 (GLKF…DFAN), 286–305 (HLKE…DKFA), 311–333 (ELTK…AFHH), and 336–357 (QMET…TVES). N-linked (GlcNAc...) asparagine glycosylation is present at Asn94. The region spanning 369-422 (NPIRCDCVIRWANATGTRVRFIEPQSTLCAEPPDLQRLPVREVPFREMTDHCLP) is the LRRCT domain. N-linked (GlcNAc...) asparagine glycosylation occurs at Asn381. Positions 422–511 (PLISPRSFPP…LVGADTKTVS (90 aa)) constitute an Ig-like C2-type domain. A disulfide bridge links Cys445 with Cys497. 2 N-linked (GlcNAc...) asparagine glycosylation sites follow: Asn555 and Asn583. A helical transmembrane segment spans residues 631–651 (LIAILALAVLLLAAGLAAHLG). Residues 652–713 (TGQPRKGVGG…TLLPPLSQNS (62 aa)) lie on the Cytoplasmic side of the membrane.

As to expression, overamplified in malignant gliomas.

It localises to the membrane. The protein is Leucine-rich repeat neuronal protein 2 (LRRN2) of Homo sapiens (Human).